The sequence spans 383 residues: NAIADYRTFPLISPLASAASFASGVSVTWADGRVSPFHNLWLRDNCPCGDCVYEVTREQVFLVADVPEDIQVQAVTIGDDGRLVVQWDDGHASAYHPGWLRAHAYDAQSLAEREAARPHKHRWMQGLSLPVYDHGAVMQDDDTLLEWLLAVRDVGLTQLHGVPTEPGALIPLAKRISFIRESNFGVLFDVRSKADADSNAYTAFNLPLHTDLPTRELQPGLQFLHCLVNDATGGNSTFVDGFAIAEALRIEAPAAYRLLCETPVEFRNKDRHSDYRCTAPVIALDSSGEVREIRLANFLRAPFQMDAQRMPDYYLAYRRFIQMTREPRFCFTRRLEAGQLWCFDNRRVLHARDAFDPASGDRHFQGCYVDRDELLSRILVLQR.

Positions 46, 48, 51, and 91 each coordinate Zn(2+). Fe cation-binding residues include H209, D211, and H350.

This sequence belongs to the gamma-BBH/TMLD family. As to quaternary structure, homodimer. Fe(2+) serves as cofactor. Requires L-ascorbate as cofactor.

The protein resides in the cytoplasm. The catalysed reaction is 4-(trimethylamino)butanoate + 2-oxoglutarate + O2 = carnitine + succinate + CO2. The protein operates within amine and polyamine biosynthesis; carnitine biosynthesis. Functionally, catalyzes the formation of L-carnitine from gamma-butyrobetaine. In Pseudomonas sp. (strain AK-1), this protein is Gamma-butyrobetaine dioxygenase.